Consider the following 101-residue polypeptide: Small ribosomal subunit protein uS14 (101 aa).

The protein belongs to the universal ribosomal protein uS14 family. In terms of assembly, part of the 30S ribosomal subunit. Contacts proteins S3 and S10.

In terms of biological role, binds 16S rRNA, required for the assembly of 30S particles and may also be responsible for determining the conformation of the 16S rRNA at the A site. The sequence is that of Small ribosomal subunit protein uS14 from Janthinobacterium sp. (strain Marseille) (Minibacterium massiliensis).